A 487-amino-acid polypeptide reads, in one-letter code: Adenosylhomocysteinase (487 aa).

Substrate-binding residues include Thr-76, Asp-151, and Glu-212. An NAD(+)-binding site is contributed by Thr-213–Thr-215. 2 residues coordinate substrate: Lys-242 and Asp-246. NAD(+) is bound by residues Asn-247, Gly-276–Gly-281, Glu-299, Asn-334, Ile-355–His-357, and Asn-403.

This sequence belongs to the adenosylhomocysteinase family. NAD(+) is required as a cofactor.

It localises to the cytoplasm. It catalyses the reaction S-adenosyl-L-homocysteine + H2O = L-homocysteine + adenosine. Its pathway is amino-acid biosynthesis; L-homocysteine biosynthesis; L-homocysteine from S-adenosyl-L-homocysteine: step 1/1. Functionally, may play a key role in the regulation of the intracellular concentration of adenosylhomocysteine. The polypeptide is Adenosylhomocysteinase (Bacteroides fragilis (strain YCH46)).